The primary structure comprises 921 residues: Isoleucine--tRNA ligase (921 aa).

A 'HIGH' region motif is present at residues 57-67 (PYANGDIHMGH). Glutamate 552 serves as a coordination point for L-isoleucyl-5'-AMP. The 'KMSKS' region motif lies at 593–597 (KMSKS). ATP is bound at residue lysine 596. 4 residues coordinate Zn(2+): cysteine 888, cysteine 891, cysteine 908, and cysteine 911.

The protein belongs to the class-I aminoacyl-tRNA synthetase family. IleS type 1 subfamily. In terms of assembly, monomer. Requires Zn(2+) as cofactor.

It localises to the cytoplasm. The enzyme catalyses tRNA(Ile) + L-isoleucine + ATP = L-isoleucyl-tRNA(Ile) + AMP + diphosphate. Catalyzes the attachment of isoleucine to tRNA(Ile). As IleRS can inadvertently accommodate and process structurally similar amino acids such as valine, to avoid such errors it has two additional distinct tRNA(Ile)-dependent editing activities. One activity is designated as 'pretransfer' editing and involves the hydrolysis of activated Val-AMP. The other activity is designated 'posttransfer' editing and involves deacylation of mischarged Val-tRNA(Ile). The sequence is that of Isoleucine--tRNA ligase from Bacillus mycoides (strain KBAB4) (Bacillus weihenstephanensis).